Consider the following 187-residue polypeptide: Elongation factor P (187 aa).

This sequence belongs to the elongation factor P family.

It localises to the cytoplasm. It functions in the pathway protein biosynthesis; polypeptide chain elongation. Its function is as follows. Involved in peptide bond synthesis. Stimulates efficient translation and peptide-bond synthesis on native or reconstituted 70S ribosomes in vitro. Probably functions indirectly by altering the affinity of the ribosome for aminoacyl-tRNA, thus increasing their reactivity as acceptors for peptidyl transferase. The sequence is that of Elongation factor P from Syntrophus aciditrophicus (strain SB).